The primary structure comprises 316 residues: D-alanine--D-alanine ligase (316 aa).

Residues 129-316 form the ATP-grasp domain; it reads KYILQAAGIP…ALQAEFCRYP (188 aa). 162–217 is a binding site for ATP; sequence EGSLLYPMFIKPANMGSSVGITKAENREELQNALQEAYRYDTRAIVEQGIEAREIE. 3 residues coordinate Mg(2+): D288, E301, and N303.

It belongs to the D-alanine--D-alanine ligase family. Requires Mg(2+) as cofactor. Mn(2+) is required as a cofactor.

It is found in the cytoplasm. It catalyses the reaction 2 D-alanine + ATP = D-alanyl-D-alanine + ADP + phosphate + H(+). It functions in the pathway cell wall biogenesis; peptidoglycan biosynthesis. In terms of biological role, cell wall formation. The protein is D-alanine--D-alanine ligase (ddl) of Enterococcus gallinarum.